We begin with the raw amino-acid sequence, 218 residues long: MGQKINPLGFRLGTTQDHYSLWFAQPKNFSEGLQEDQKIRNCIKNYVQKNMKISSGVEGIGHIEIQKRIDVIQVIIYLGFPKFLTEGKPKRIKELQINVQKELNCMNRKLNISITRIENPYMHPNVLAEFIAGQLKNRVSFRKAMKKAIELTEQSNTKGIQVQIAGRLDGKEIARAEWVREGRVPLQTLRAKINYCSYTVRTIYGVLGIKIWIFVDEE.

Residues 43-118 (IKNYVQKNMK…KLNISITRIE (76 aa)) form the KH type-2 domain.

The protein belongs to the universal ribosomal protein uS3 family. Part of the 30S ribosomal subunit.

It is found in the plastid. It localises to the chloroplast. This is Small ribosomal subunit protein uS3c (rps3) from Populus alba (White poplar).